The chain runs to 275 residues: MNYKNPTHLQAAILDWAGTVVDFGSFAPTQIFVEAFAEFDVEVSIEEARGPMGMGKWDHIRTLCDQPQIAERYRKVFGRTPTDDDVTAIYQRFMPLQIEKIAVHSALIPGALETLTGLRQNGLKIGSCSGYPKVVMDKVVELAAKNGYVADHVVATDETPNGRPWPAQALANVIALGIDDVAACVKVDDTVPGILEGRRAGMWTVALVCSGNALGLTYEGYRALDPNTLEAERKRIHAMFEGSRPHYLIDTINELPGVITDINQRLARGEMPQAV.

Asp15 serves as the catalytic Nucleophile. Residues Asp15 and Ala17 each contribute to the Mg(2+) site. Lys56 acts as the Schiff-base intermediate with substrate in catalysis. Asp189 contacts Mg(2+).

This sequence belongs to the HAD-like hydrolase superfamily. PhnX family. As to quaternary structure, homodimer. Mg(2+) serves as cofactor.

The catalysed reaction is phosphonoacetaldehyde + H2O = acetaldehyde + phosphate + H(+). Functionally, involved in phosphonate degradation. The sequence is that of Phosphonoacetaldehyde hydrolase from Pseudomonas putida (Arthrobacter siderocapsulatus).